Reading from the N-terminus, the 55-residue chain is Large ribosomal subunit protein bL33 (55 aa).

Belongs to the bacterial ribosomal protein bL33 family.

The polypeptide is Large ribosomal subunit protein bL33 (Methylorubrum extorquens (strain CM4 / NCIMB 13688) (Methylobacterium extorquens)).